A 126-amino-acid polypeptide reads, in one-letter code: uncharacterized protein (126 aa).

This is an uncharacterized protein from Escherichia coli (Bacteriophage T4).